Here is a 225-residue protein sequence, read N- to C-terminus: Small ribosomal subunit protein uS3 (225 aa).

One can recognise a KH type-2 domain in the interval 38–106; that stretch reads LRGHLRKKLS…DVALNIVEIR (69 aa).

The protein belongs to the universal ribosomal protein uS3 family. As to quaternary structure, part of the 30S ribosomal subunit. Forms a tight complex with proteins S10 and S14.

Its function is as follows. Binds the lower part of the 30S subunit head. Binds mRNA in the 70S ribosome, positioning it for translation. The sequence is that of Small ribosomal subunit protein uS3 from Granulibacter bethesdensis (strain ATCC BAA-1260 / CGDNIH1).